A 310-amino-acid polypeptide reads, in one-letter code: Bis(hydroxyethyl) terephthalate hydrolase (310 aa).

A signal peptide (tat-type signal) is located at residues 1 to 48; it reads MQQNPHTHAAPGAARPVLRGVRRRLAAVTAAVAAVLVLGTLTGPGAQA. Phenylalanine 111 is a bis(2-hydroxyethyl) terephthalate binding site. The Nucleophile role is filled by serine 179. Bis(2-hydroxyethyl) terephthalate contacts are provided by methionine 180 and tryptophan 204. Active-site charge relay system residues include aspartate 225 and histidine 257. Cysteine 290 and cysteine 306 are disulfide-bonded.

The protein belongs to the AB hydrolase superfamily. Predicted to be exported by the Tat system. The position of the signal peptide cleavage has not been experimentally proven.

The protein localises to the secreted. The enzyme catalyses bis(2-hydroxyethyl) terephthalate + H2O = 4-[(2-hydroxyethoxy)carbonyl]benzoate + ethylene glycol + H(+). Functionally, catalyzes the degradation of bis(hydroxyethyl) terephthalate (BHET), a derived-oligomer of the plastic poly(ethylene terephthalate) (PET), hydrolyzing BHET to mono(2-hydroxyethyl) terephthalate (MHET). Shows no activity against PET. This Streptomyces coelicolor (strain ATCC BAA-471 / A3(2) / M145) protein is Bis(hydroxyethyl) terephthalate hydrolase.